Consider the following 226-residue polypeptide: 7-cyano-7-deazaguanine synthase (226 aa).

8 to 18 serves as a coordination point for ATP; it reads ISGGLDSTTCL. 4 residues coordinate Zn(2+): Cys-188, Cys-198, Cys-201, and Cys-204.

Belongs to the QueC family. Zn(2+) is required as a cofactor.

The enzyme catalyses 7-carboxy-7-deazaguanine + NH4(+) + ATP = 7-cyano-7-deazaguanine + ADP + phosphate + H2O + H(+). Its pathway is purine metabolism; 7-cyano-7-deazaguanine biosynthesis. Catalyzes the ATP-dependent conversion of 7-carboxy-7-deazaguanine (CDG) to 7-cyano-7-deazaguanine (preQ(0)). The polypeptide is 7-cyano-7-deazaguanine synthase (Coxiella burnetii (strain RSA 493 / Nine Mile phase I)).